Consider the following 414-residue polypeptide: Probable serine/threonine-protein kinase PBL26 (414 aa).

Cysteine 3 carries the S-palmitoyl cysteine lipid modification. The span at 17–41 (RDSDNSYRRNGEVTGRDNNKTHPEN) shows a compositional bias: basic and acidic residues. A disordered region spans residues 17–55 (RDSDNSYRRNGEVTGRDNNKTHPENPKTVNEQNKNNDED). A Protein kinase domain is found at 79–356 (FRQECLIGEG…SDVVTALGFL (278 aa)). ATP is bound by residues 85-93 (IGEGGFGRV) and lysine 108. The residue at position 153 (tyrosine 153) is a Phosphotyrosine. Aspartate 206 (proton acceptor) is an active-site residue. Serine 240 carries the post-translational modification Phosphoserine. Threonine 246 is subject to Phosphothreonine. Tyrosine 254 is subject to Phosphotyrosine. The tract at residues 364 to 394 (ISVPHYDDPPQPSDETSVEDSVAAEERERAV) is disordered.

The protein belongs to the protein kinase superfamily. Ser/Thr protein kinase family. Post-translationally, palmitoylation at Cys-3 and Cys-6 are required for plasma membrane location.

The protein localises to the cell membrane. The catalysed reaction is L-seryl-[protein] + ATP = O-phospho-L-seryl-[protein] + ADP + H(+). The enzyme catalyses L-threonyl-[protein] + ATP = O-phospho-L-threonyl-[protein] + ADP + H(+). In terms of biological role, may be involved in plant defense signaling. The chain is Probable serine/threonine-protein kinase PBL26 from Arabidopsis thaliana (Mouse-ear cress).